Consider the following 193-residue polypeptide: Acyl carrier protein phosphodiesterase (193 aa).

Belongs to the AcpH family.

It catalyses the reaction holo-[ACP] + H2O = apo-[ACP] + (R)-4'-phosphopantetheine + H(+). Its function is as follows. Converts holo-ACP to apo-ACP by hydrolytic cleavage of the phosphopantetheine prosthetic group from ACP. The protein is Acyl carrier protein phosphodiesterase of Escherichia coli O157:H7.